A 412-amino-acid polypeptide reads, in one-letter code: [Pyruvate dehydrogenase (acetyl-transferring)] kinase isozyme 4, mitochondrial (412 aa).

In terms of domain architecture, Histidine kinase spans 138-368 (ILEYKDTCTV…DAIIYLKALS (231 aa)). ATP contacts are provided by residues 254 to 261 (ELFKNAMR), D293, 312 to 313 (ST), and 329 to 334 (GFGYGL).

The protein belongs to the PDK/BCKDK protein kinase family. In terms of assembly, homodimer. Interacts with the pyruvate dehydrogenase complex subunit DLAT, and is part of the multimeric pyruvate dehydrogenase complex that contains multiple copies of pyruvate dehydrogenase (E1), dihydrolipoamide acetyltransferase (DLAT, E2) and lipoamide dehydrogenase (DLD, E3).

It is found in the mitochondrion matrix. It carries out the reaction L-seryl-[pyruvate dehydrogenase E1 alpha subunit] + ATP = O-phospho-L-seryl-[pyruvate dehydrogenase E1 alpha subunit] + ADP + H(+). In terms of biological role, kinase that plays a key role in regulation of glucose and fatty acid metabolism and homeostasis via phosphorylation of the pyruvate dehydrogenase subunits PDHA1 and PDHA2. This inhibits pyruvate dehydrogenase activity, and thereby regulates metabolite flux through the tricarboxylic acid cycle, down-regulates aerobic respiration and inhibits the formation of acetyl-coenzyme A from pyruvate. Inhibition of pyruvate dehydrogenase decreases glucose utilization and increases fat metabolism in response to prolonged fasting and starvation. Plays an important role in maintaining normal blood glucose levels under starvation, and is involved in the insulin signaling cascade. Via its regulation of pyruvate dehydrogenase activity, plays an important role in maintaining normal blood pH and in preventing the accumulation of ketone bodies under starvation. In the fed state, mediates cellular responses to glucose levels and to a high-fat diet. Regulates both fatty acid oxidation and de novo fatty acid biosynthesis. Plays a role in the generation of reactive oxygen species. Protects detached epithelial cells against anoikis. Plays a role in cell proliferation via its role in regulating carbohydrate and fatty acid metabolism. The chain is [Pyruvate dehydrogenase (acetyl-transferring)] kinase isozyme 4, mitochondrial (Pdk4) from Mus musculus (Mouse).